We begin with the raw amino-acid sequence, 439 residues long: Hydroxyornithine transacylase SID3 (439 aa).

The short motif at 437 to 439 is the PTS1-type peroxisomal targeting signal element; it reads SKL.

This sequence belongs to the lysine N-acyltransferase mbtK family.

The protein resides in the peroxisome. The protein operates within siderophore biosynthesis. In terms of biological role, hydroxyornithine transacylase; part of the gene cluster that mediates the biosynthesis of hydroxamate-containing siderophores that play a critical role in virulence via intracellular iron acquisition during macrophage infection. This is Hydroxyornithine transacylase SID3 from Ajellomyces capsulatus (Darling's disease fungus).